Consider the following 390-residue polypeptide: Lipid-A-disaccharide synthase (390 aa).

It belongs to the LpxB family.

The enzyme catalyses a lipid X + a UDP-2-N,3-O-bis[(3R)-3-hydroxyacyl]-alpha-D-glucosamine = a lipid A disaccharide + UDP + H(+). The protein operates within bacterial outer membrane biogenesis; LPS lipid A biosynthesis. Functionally, condensation of UDP-2,3-diacylglucosamine and 2,3-diacylglucosamine-1-phosphate to form lipid A disaccharide, a precursor of lipid A, a phosphorylated glycolipid that anchors the lipopolysaccharide to the outer membrane of the cell. This Neisseria gonorrhoeae (strain ATCC 700825 / FA 1090) protein is Lipid-A-disaccharide synthase.